Consider the following 120-residue polypeptide: Lysozyme (120 aa).

In terms of domain architecture, C-type lysozyme spans 1–120 (KRFTRCGLVN…NHSNPDISSC (120 aa)). Cystine bridges form between cysteine 6–cysteine 120, cysteine 27–cysteine 110, cysteine 62–cysteine 76, and cysteine 72–cysteine 90. Residues glutamate 32 and aspartate 50 contribute to the active site.

It belongs to the glycosyl hydrolase 22 family. In terms of assembly, monomer.

The catalysed reaction is Hydrolysis of (1-&gt;4)-beta-linkages between N-acetylmuramic acid and N-acetyl-D-glucosamine residues in a peptidoglycan and between N-acetyl-D-glucosamine residues in chitodextrins.. In terms of biological role, lysozymes have primarily a bacteriolytic function; those in tissues and body fluids are associated with the monocyte-macrophage system and enhance the activity of immunoagents. In Antheraea mylitta (Tasar silkworm), this protein is Lysozyme.